The primary structure comprises 173 residues: Soluble secreted antigen MPT53 (173 aa).

The N-terminal stretch at 1–38 (MSLRLVSPIKAFADGIVAVAIAVVLMFGLANTPRAVAA) is a signal peptide. Cysteine 73 and cysteine 76 are disulfide-bonded.

This sequence belongs to the thioredoxin family.

It localises to the secreted. Its function is as follows. Disulfide oxidoreductase that catalyzes the oxidation of reduced, unfolded secreted proteins to form disulfide bonds. Despite a weak homology to thioredoxin this cannot serve as a substrate for thioredoxin reductase. The chain is Soluble secreted antigen MPT53 (mpt53) from Mycobacterium bovis (strain ATCC BAA-935 / AF2122/97).